The following is a 424-amino-acid chain: L-glutamine:2-deoxy-scyllo-inosose aminotransferase (424 aa).

Lys-202 bears the N6-(pyridoxal phosphate)lysine mark.

Belongs to the DegT/DnrJ/EryC1 family. L-glutamine:2-deoxy-scyllo-inosose/scyllo-inosose aminotransferase subfamily. It depends on pyridoxal 5'-phosphate as a cofactor.

It catalyses the reaction 2-deoxy-L-scyllo-inosose + L-glutamine = 2-deoxy-scyllo-inosamine + 2-oxoglutaramate. It carries out the reaction 3-amino-2,3-dideoxy-scyllo-inosose + L-glutamine = 2-deoxystreptamine + 2-oxoglutaramate. It functions in the pathway metabolic intermediate biosynthesis; 2-deoxystreptamine biosynthesis; 2-deoxystreptamine from D-glucose 6-phosphate: step 2/4. Its pathway is metabolic intermediate biosynthesis; 2-deoxystreptamine biosynthesis; 2-deoxystreptamine from D-glucose 6-phosphate: step 4/4. The protein operates within antibiotic biosynthesis; paromomycin biosynthesis. Catalyzes the PLP-dependent transamination of 2-deoxy-scyllo-inosose (2-DOI) to form 2-deoxy-scyllo-inosamine (2-DOIA) using L-glutamine as the amino donor. Also catalyzes the transamination of 3-amino-2,3-dideoxy-scyllo-inosose (keto-2-DOIA) into 2-deoxystreptamine (2-DOS). This chain is L-glutamine:2-deoxy-scyllo-inosose aminotransferase (parS), found in Streptomyces paromomycinus (Streptomyces rimosus subsp. paromomycinus).